We begin with the raw amino-acid sequence, 446 residues long: Exodeoxyribonuclease 7 large subunit (446 aa).

This sequence belongs to the XseA family. Heterooligomer composed of large and small subunits.

It is found in the cytoplasm. It carries out the reaction Exonucleolytic cleavage in either 5'- to 3'- or 3'- to 5'-direction to yield nucleoside 5'-phosphates.. In terms of biological role, bidirectionally degrades single-stranded DNA into large acid-insoluble oligonucleotides, which are then degraded further into small acid-soluble oligonucleotides. This chain is Exodeoxyribonuclease 7 large subunit, found in Streptococcus pneumoniae (strain Hungary19A-6).